We begin with the raw amino-acid sequence, 433 residues long: Serine--tRNA ligase (433 aa).

235–237 contributes to the L-serine binding site; it reads TSE. 266 to 268 provides a ligand contact to ATP; the sequence is RSE. E289 contributes to the L-serine binding site. 353–356 contacts ATP; sequence EISS. S388 provides a ligand contact to L-serine.

The protein belongs to the class-II aminoacyl-tRNA synthetase family. Type-1 seryl-tRNA synthetase subfamily. Homodimer. The tRNA molecule binds across the dimer.

Its subcellular location is the cytoplasm. It carries out the reaction tRNA(Ser) + L-serine + ATP = L-seryl-tRNA(Ser) + AMP + diphosphate + H(+). The enzyme catalyses tRNA(Sec) + L-serine + ATP = L-seryl-tRNA(Sec) + AMP + diphosphate + H(+). Its pathway is aminoacyl-tRNA biosynthesis; selenocysteinyl-tRNA(Sec) biosynthesis; L-seryl-tRNA(Sec) from L-serine and tRNA(Sec): step 1/1. Catalyzes the attachment of serine to tRNA(Ser). Is also able to aminoacylate tRNA(Sec) with serine, to form the misacylated tRNA L-seryl-tRNA(Sec), which will be further converted into selenocysteinyl-tRNA(Sec). This Burkholderia cenocepacia (strain ATCC BAA-245 / DSM 16553 / LMG 16656 / NCTC 13227 / J2315 / CF5610) (Burkholderia cepacia (strain J2315)) protein is Serine--tRNA ligase.